A 551-amino-acid polypeptide reads, in one-letter code: Cleavage and polyadenylation specificity factor subunit 6 (551 aa).

A necessary for interaction with NXF1 region spans residues 1–213 (MADGVDHIDI…RGRFPGAVPG (213 aa)). Positions 81-161 (IALYIGNLTW…QNPVVTPCNK (81 aa)) constitute an RRM domain. The tract at residues 81-161 (IALYIGNLTW…QNPVVTPCNK (81 aa)) is necessary for interaction with NUDT21/CPSF5. The interval 81-161 (IALYIGNLTW…QNPVVTPCNK (81 aa)) is necessary for nuclear paraspeckles localization. A Phosphothreonine modification is found at Thr-157. The segment covering 169–180 (MQSRKTTQSGQM) has biased composition (polar residues). 2 disordered regions span residues 169-411 (MQSR…PLSE) and 477-551 (LHGI…YRHR). The GAR motif lies at 202 to 206 (RGRGR). A compositionally biased stretch (low complexity) spans 207–219 (FPGAVPGGDRFPG). Pro residues-rich tracts occupy residues 220-265 (PAGP…PLAG), 285-366 (GQPP…PPPT), and 377-388 (GPPPTDPYGRPP). Over residues 389-404 (PYDRGDYGPPGREMDT) the composition is skewed to basic and acidic residues. Phosphothreonine is present on residues Thr-404 and Thr-407. The sufficient for nuclear speckle localization stretch occupies residues 404–551 (TARTPLSEAE…RDREREYRHR (148 aa)). Residues 405–551 (ARTPLSEAEF…RDREREYRHR (147 aa)) are necessary for RNA-binding. Positions 481–551 (ESKSYGSGSR…RDREREYRHR (71 aa)) are necessary for interaction with SRSF3, SRSF7 and TRA2B/SFRS10. Positions 489-503 (SRRERSRERDHSRSR) are enriched in basic and acidic residues. The arg/Ser-rich domain stretch occupies residues 490 to 551 (RRERSRERDH…RDREREYRHR (62 aa)). Ser-494, Ser-500, Ser-511, Ser-513, and Ser-525 each carry phosphoserine. Basic residues predominate over residues 504-514 (EKSRRHKSRSR). The interval 510–551 (KSRSRDRHDDYYRERSRERERHRDRDRDRDRERDREREYRHR) is sufficient for nuclear targeting. Over residues 515-551 (DRHDDYYRERSRERERHRDRDRDRDRERDREREYRHR) the composition is skewed to basic and acidic residues.

This sequence belongs to the RRM CPSF6/7 family. As to quaternary structure, component of the cleavage factor Im (CFIm) complex which is a heterotetramer composed of two subunits of NUDT21/CPSF5 and two subunits of CPSF6 or CPSF7 or a heterodimer of CPSF6 and CPSF7. The cleavage factor Im (CFIm) complex associates with the CPSF and CSTF complexes to promote the assembly of the core mRNA 3'-processing machinery. Associates with the exon junction complex (EJC). Associates with the 80S ribosome particle. Interacts (via the RRM domain) with NUDT21/CPSF5; this interaction is direct and enhances binding to RNA. Interacts (via Arg/Ser-rich domain) with FIP1L1 (preferentially via unphosphorylated form and Arg/Glu/Asp-rich domain); this interaction mediates, at least in part, the interaction between the CFIm and CPSF complexes and may be inhibited by CPSF6 hyper-phosphorylation. Interacts (via N-terminus) with NXF1; this interaction is direct. Interacts with SRSF3. Interacts with SRSF7. Interacts with SNRNP70. Interacts with TRA2B/SFRS10. Interacts with UPF1. Interacts with UPF3B. Interacts with VIRMA. Interacts (via Arg/Ser-rich domain) with TNPO3; promoting nuclear import of CPSF6 independently of its phosphorylation status. Interacts with YTHDC1. Phosphorylated. Phosphorylated in the Arg/Ser-rich domain by SRPK1, in vitro. Post-translationally, symmetrically dimethylated on arginine residues in the GAR motif by PRMT5 in a WDR77- and CLNS1A-dependent manner. Asymmetrically dimethylated on arginine residues in the GAR motif by PRMT1.

Its subcellular location is the nucleus. It localises to the nucleoplasm. The protein localises to the nucleus speckle. It is found in the cytoplasm. Its function is as follows. Component of the cleavage factor Im (CFIm) complex that functions as an activator of the pre-mRNA 3'-end cleavage and polyadenylation processing required for the maturation of pre-mRNA into functional mRNAs. CFIm contributes to the recruitment of multiprotein complexes on specific sequences on the pre-mRNA 3'-end, so called cleavage and polyadenylation signals (pA signals). Most pre-mRNAs contain multiple pA signals, resulting in alternative cleavage and polyadenylation (APA) producing mRNAs with variable 3'-end formation. The CFIm complex acts as a key regulator of cleavage and polyadenylation site choice during APA through its binding to 5'-UGUA-3' elements localized in the 3'-untranslated region (UTR) for a huge number of pre-mRNAs. CPSF6 enhances NUDT21/CPSF5 binding to 5'-UGUA-3' elements localized upstream of pA signals and promotes RNA looping, and hence activates directly the mRNA 3'-processing machinery. Plays a role in mRNA export. This Bos taurus (Bovine) protein is Cleavage and polyadenylation specificity factor subunit 6.